The primary structure comprises 266 residues: Killer cell lectin-like receptor 6 (266 aa).

Residues 1–44 (MSEPEVTYSTVRLHKSSRLQKLVRHEETQGPREAGYRKCSVCWQ) are Cytoplasmic-facing. Residues 45-66 (LIVKALGILCFLLLITVAVLAV) traverse the membrane as a helical; Signal-anchor for type II membrane protein segment. The Extracellular segment spans residues 67–266 (KIFQYGQHNQ…CGKKLDKFPH (200 aa)). Residues asparagine 87 and asparagine 104 are each glycosylated (N-linked (GlcNAc...) asparagine). One can recognise a C-type lectin domain in the interval 143 to 261 (GVKYWFCYRT…SHYCICGKKL (119 aa)). 4 disulfide bridges follow: cysteine 149–cysteine 154, cysteine 167–cysteine 255, cysteine 171–cysteine 257, and cysteine 236–cysteine 249.

In terms of assembly, homodimer; disulfide-linked.

It localises to the membrane. In terms of biological role, receptor on natural killer (NK) cells for class I MHC. This chain is Killer cell lectin-like receptor 6 (Klra6), found in Mus musculus (Mouse).